Here is a 219-residue protein sequence, read N- to C-terminus: Thiamine-phosphate synthase (219 aa).

Residues 44 to 48 (QLREK) and Asn79 contribute to the 4-amino-2-methyl-5-(diphosphooxymethyl)pyrimidine site. 2 residues coordinate Mg(2+): Asp80 and Asp99. Ser117 is a 4-amino-2-methyl-5-(diphosphooxymethyl)pyrimidine binding site. 143 to 145 (TST) lines the 2-[(2R,5Z)-2-carboxy-4-methylthiazol-5(2H)-ylidene]ethyl phosphate pocket. Lys146 provides a ligand contact to 4-amino-2-methyl-5-(diphosphooxymethyl)pyrimidine. 2-[(2R,5Z)-2-carboxy-4-methylthiazol-5(2H)-ylidene]ethyl phosphate contacts are provided by residues Gly175 and 195–196 (IS).

It belongs to the thiamine-phosphate synthase family. Requires Mg(2+) as cofactor.

The catalysed reaction is 2-[(2R,5Z)-2-carboxy-4-methylthiazol-5(2H)-ylidene]ethyl phosphate + 4-amino-2-methyl-5-(diphosphooxymethyl)pyrimidine + 2 H(+) = thiamine phosphate + CO2 + diphosphate. It carries out the reaction 2-(2-carboxy-4-methylthiazol-5-yl)ethyl phosphate + 4-amino-2-methyl-5-(diphosphooxymethyl)pyrimidine + 2 H(+) = thiamine phosphate + CO2 + diphosphate. The enzyme catalyses 4-methyl-5-(2-phosphooxyethyl)-thiazole + 4-amino-2-methyl-5-(diphosphooxymethyl)pyrimidine + H(+) = thiamine phosphate + diphosphate. It participates in cofactor biosynthesis; thiamine diphosphate biosynthesis; thiamine phosphate from 4-amino-2-methyl-5-diphosphomethylpyrimidine and 4-methyl-5-(2-phosphoethyl)-thiazole: step 1/1. In terms of biological role, condenses 4-methyl-5-(beta-hydroxyethyl)thiazole monophosphate (THZ-P) and 2-methyl-4-amino-5-hydroxymethyl pyrimidine pyrophosphate (HMP-PP) to form thiamine monophosphate (TMP). In Bacillus mycoides (strain KBAB4) (Bacillus weihenstephanensis), this protein is Thiamine-phosphate synthase.